The following is a 181-amino-acid chain: S-fimbrial protein subunit SfaA (181 aa).

Positions 1-24 (MKLKFISMAVFSALTLGVATNASA) are cleaved as a signal peptide. A disulfide bridge connects residues C44 and C84.

Belongs to the fimbrial protein family.

Its subcellular location is the fimbrium. In terms of biological role, fimbriae (also called pili), polar filaments radiating from the surface of the bacterium to a length of 0.5-1.5 micrometers and numbering 100-300 per cell, enable bacteria to colonize the epithelium of specific host organs. Functionally, the major fimbrial subunit. Interacts with alpha-sialic acid-(2-3)-beta-Gal containing receptors. It belongs to the group of Mrh (Mannose-resistant hemagglutination) fimbrial proteins. The protein is S-fimbrial protein subunit SfaA (sfaA) of Escherichia coli O6:K15:H31 (strain 536 / UPEC).